The following is a 554-amino-acid chain: Glucose-6-phosphate isomerase (554 aa).

Ser2 carries the post-translational modification N-acetylserine. At Thr53 the chain carries Phosphothreonine. D-glucose 6-phosphate-binding positions include 168–169 (GS), 218–223 (SKTFTT), Gln363, Glu367, His398, and Lys520. The residue at position 220 (Thr220) is a Phosphothreonine. Residue Glu367 is the Proton donor of the active site. Residues His398 and Lys520 contribute to the active site.

Belongs to the GPI family. In terms of assembly, homodimer.

It localises to the cytoplasm. Its subcellular location is the cytosol. It carries out the reaction alpha-D-glucose 6-phosphate = beta-D-fructose 6-phosphate. It functions in the pathway carbohydrate degradation; glycolysis; D-glyceraldehyde 3-phosphate and glycerone phosphate from D-glucose: step 2/4. Strongly inhibited by the polyol (sugar alcohol) phosphate D-glucitol 6-phosphate (D-sorbitol 6-phosphate). Also inhibited by the polyol (sugar alcohol) phosphate D-ribitol 5-phosphate. In terms of biological role, in the cytoplasm, catalyzes the conversion of glucose-6-phosphate to fructose-6-phosphate, the second step in glycolysis, and the reverse reaction during gluconeogenesis. The sequence is that of Glucose-6-phosphate isomerase (PGI1) from Saccharomyces cerevisiae (strain ATCC 204508 / S288c) (Baker's yeast).